A 36-amino-acid polypeptide reads, in one-letter code: Photosystem I reaction center subunit VIII (36 aa).

The chain crosses the membrane as a helical span at residues 9–29; sequence ILVPLVGLIFPAFSMALFFLY.

This sequence belongs to the PsaI family.

Its subcellular location is the plastid. It is found in the chloroplast thylakoid membrane. Its function is as follows. May help in the organization of the PsaL subunit. In Thalassiosira pseudonana (Marine diatom), this protein is Photosystem I reaction center subunit VIII.